The sequence spans 200 residues: Phosphoheptose isomerase (200 aa).

An SIS domain is found at 37–199; that stretch reads VLGCITAGGK…DVQLLGEQDL (163 aa). 52–54 contacts substrate; the sequence is NGG. Zn(2+)-binding residues include His61 and Glu65. Substrate-binding positions include Glu65, 94–95, 120–122, Ser125, and Gln175; these read ND and TTS. Residues Gln175 and His183 each contribute to the Zn(2+) site.

Belongs to the SIS family. GmhA subfamily. As to quaternary structure, homotetramer. It depends on Zn(2+) as a cofactor.

The protein localises to the cytoplasm. It catalyses the reaction 2 D-sedoheptulose 7-phosphate = D-glycero-alpha-D-manno-heptose 7-phosphate + D-glycero-beta-D-manno-heptose 7-phosphate. The protein operates within carbohydrate biosynthesis; D-glycero-D-manno-heptose 7-phosphate biosynthesis; D-glycero-alpha-D-manno-heptose 7-phosphate and D-glycero-beta-D-manno-heptose 7-phosphate from sedoheptulose 7-phosphate: step 1/1. Its function is as follows. Catalyzes the isomerization of sedoheptulose 7-phosphate in D-glycero-D-manno-heptose 7-phosphate. The sequence is that of Phosphoheptose isomerase from Methylibium petroleiphilum (strain ATCC BAA-1232 / LMG 22953 / PM1).